The following is a 364-amino-acid chain: Pyrimidine monooxygenase RutA (364 aa).

Residues 49–50, Asn115, Glu124, 140–141, and Ser190 each bind FMN; these read IK and RY.

This sequence belongs to the NtaA/SnaA/DszA monooxygenase family. RutA subfamily.

It catalyses the reaction uracil + FMNH2 + NADH + O2 = (Z)-3-ureidoacrylate + FMN + NAD(+) + H2O + H(+). It carries out the reaction thymine + FMNH2 + NADH + O2 = (Z)-2-methylureidoacrylate + FMN + NAD(+) + H2O + H(+). Functionally, catalyzes the pyrimidine ring opening between N-3 and C-4 by an unusual flavin hydroperoxide-catalyzed mechanism, adding oxygen atoms in the process to yield ureidoacrylate peracid, that immediately reacts with FMN forming ureidoacrylate and FMN-N(5)-oxide. The FMN-N(5)-oxide reacts spontaneously with NADH to produce FMN. Requires the flavin reductase RutF to regenerate FMN in vivo. In Methylorubrum extorquens (strain ATCC 14718 / DSM 1338 / JCM 2805 / NCIMB 9133 / AM1) (Methylobacterium extorquens), this protein is Pyrimidine monooxygenase RutA.